We begin with the raw amino-acid sequence, 248 residues long: Anamorsin homolog (248 aa).

The interval 4–129 is N-terminal SAM-like domain; the sequence is FKGLQKSLYI…ETGSSARLSF (126 aa). The linker stretch occupies residues 130–161; that stretch reads AKKNANAANVWKISGDDEELIDEEELLDEEDK. The [2Fe-2S] cluster site is built by cysteine 172, cysteine 181, cysteine 184, and cysteine 186. A fe-S binding site A region spans residues 172-186; it reads CSTTGKRKACKNCSC. Positions 209, 212, 220, and 223 each coordinate [4Fe-4S] cluster. 2 short sequence motifs (cx2C motif) span residues 209-212 and 220-223; these read CGNC and CSTC. The interval 209 to 223 is fe-S binding site B; that stretch reads CGNCYLGDAFRCSTC.

This sequence belongs to the anamorsin family. In terms of assembly, monomer. Requires [2Fe-2S] cluster as cofactor. [4Fe-4S] cluster serves as cofactor.

It is found in the cytoplasm. It localises to the mitochondrion intermembrane space. Functionally, component of the cytosolic iron-sulfur (Fe-S) protein assembly (CIA) machinery. Required for the maturation of extramitochondrial Fe-S proteins. Part of an electron transfer chain functioning in an early step of cytosolic Fe-S biogenesis, facilitating the de novo assembly of a [4Fe-4S] cluster on the cytosolic Fe-S scaffold complex. Electrons are transferred from NADPH via a FAD- and FMN-containing diflavin oxidoreductase. Together with the diflavin oxidoreductase, also required for the assembly of the diferric tyrosyl radical cofactor of ribonucleotide reductase (RNR), probably by providing electrons for reduction during radical cofactor maturation in the catalytic small subunit. In Drosophila sechellia (Fruit fly), this protein is Anamorsin homolog.